The primary structure comprises 122 residues: Large ribosomal subunit protein uL14 (122 aa).

This sequence belongs to the universal ribosomal protein uL14 family. In terms of assembly, part of the 50S ribosomal subunit. Forms a cluster with proteins L3 and L19. In the 70S ribosome, L14 and L19 interact and together make contacts with the 16S rRNA in bridges B5 and B8.

Its function is as follows. Binds to 23S rRNA. Forms part of two intersubunit bridges in the 70S ribosome. The chain is Large ribosomal subunit protein uL14 from Rhodopirellula baltica (strain DSM 10527 / NCIMB 13988 / SH1).